We begin with the raw amino-acid sequence, 260 residues long: Thrombin-like enzyme bhalternin (260 aa).

The first 18 residues, 1–18 (MVLIRVLANLLILQLSYA), serve as a signal peptide directing secretion. A propeptide spanning residues 19-24 (QKASEL) is cleaved from the precursor. The Peptidase S1 domain occupies 25–251 (VIGGDECNIN…YSEWIQSIIA (227 aa)). Cystine bridges form between Cys-31-Cys-165, Cys-50-Cys-66, Cys-144-Cys-212, Cys-176-Cys-191, and Cys-202-Cys-227. Residue Asn-44 is glycosylated (N-linked (GlcNAc...) asparagine). A glycan (N-linked (GlcNAc...) asparagine) is linked at Asn-81.

The protein belongs to the peptidase S1 family. Snake venom subfamily. As to quaternary structure, monomer. In terms of tissue distribution, expressed by the venom gland.

The protein resides in the secreted. With respect to regulation, inhibited by benzamidine and partially inhibited by EDTA. Thrombin-like snake venom serine protease that induces blood clotting in vitro, defibrinogenation in vivo (by intraperitoneal injection into mice), albuminolytic and fibrinogenolytic activities. Preferentially cleaves the alpha chain of fibrinogen (FGA). Causes hemolysis in the heart, causes apparent hyperemia and lymphocytic interstitial pneumonitis in the lung, causes necrosis and inflammatory infiltrate in the liver, and causes glomerular congestion in the kidney. Also provokes a drastic myonecrosis. This Bothrops alternatus (Urutu) protein is Thrombin-like enzyme bhalternin.